The primary structure comprises 172 residues: 3-hydroxydecanoyl-[acyl-carrier-protein] dehydratase (172 aa).

Residue histidine 70 is part of the active site.

It belongs to the thioester dehydratase family. FabA subfamily. As to quaternary structure, homodimer.

The protein resides in the cytoplasm. The enzyme catalyses a (3R)-hydroxyacyl-[ACP] = a (2E)-enoyl-[ACP] + H2O. The catalysed reaction is (3R)-hydroxydecanoyl-[ACP] = (2E)-decenoyl-[ACP] + H2O. It carries out the reaction (2E)-decenoyl-[ACP] = (3Z)-decenoyl-[ACP]. The protein operates within lipid metabolism; fatty acid biosynthesis. In terms of biological role, necessary for the introduction of cis unsaturation into fatty acids. Catalyzes the dehydration of (3R)-3-hydroxydecanoyl-ACP to E-(2)-decenoyl-ACP and then its isomerization to Z-(3)-decenoyl-ACP. Can catalyze the dehydratase reaction for beta-hydroxyacyl-ACPs with saturated chain lengths up to 16:0, being most active on intermediate chain length. The chain is 3-hydroxydecanoyl-[acyl-carrier-protein] dehydratase from Xylella fastidiosa (strain M12).